The sequence spans 80 residues: Cytochrome c-553 (80 aa).

The heme c site is built by Cys-13, Cys-16, His-17, and Met-58.

Post-translationally, binds 1 heme c group covalently per subunit.

Its subcellular location is the periplasm. Natural electron acceptor for a formate dehydrogenase. The chain is Cytochrome c-553 from Desulfomicrobium norvegicum (strain DSM 1741 / NCIMB 8310) (Desulfovibrio baculatus (strain Norway 4)).